Here is a 220-residue protein sequence, read N- to C-terminus: Fructose-6-phosphate aldolase (220 aa).

Catalysis depends on K85, which acts as the Schiff-base intermediate with substrate.

This sequence belongs to the transaldolase family. Type 3A subfamily. As to quaternary structure, homodecamer.

Its subcellular location is the cytoplasm. It carries out the reaction beta-D-fructose 6-phosphate = dihydroxyacetone + D-glyceraldehyde 3-phosphate. Catalyzes the reversible formation of fructose 6-phosphate from dihydroxyacetone and D-glyceraldehyde 3-phosphate via an aldolization reaction. The sequence is that of Fructose-6-phosphate aldolase from Salmonella agona (strain SL483).